Reading from the N-terminus, the 366-residue chain is S-adenosylmethionine:tRNA ribosyltransferase-isomerase (366 aa).

This sequence belongs to the QueA family. Monomer.

Its subcellular location is the cytoplasm. The catalysed reaction is 7-aminomethyl-7-carbaguanosine(34) in tRNA + S-adenosyl-L-methionine = epoxyqueuosine(34) in tRNA + adenine + L-methionine + 2 H(+). The protein operates within tRNA modification; tRNA-queuosine biosynthesis. Its function is as follows. Transfers and isomerizes the ribose moiety from AdoMet to the 7-aminomethyl group of 7-deazaguanine (preQ1-tRNA) to give epoxyqueuosine (oQ-tRNA). The polypeptide is S-adenosylmethionine:tRNA ribosyltransferase-isomerase (Methylorubrum populi (strain ATCC BAA-705 / NCIMB 13946 / BJ001) (Methylobacterium populi)).